A 522-amino-acid chain; its full sequence is GMP synthase [glutamine-hydrolyzing] (522 aa).

Positions 8-204 (RLLIIDFGSQ…FVRLAGFKGD (197 aa)) constitute a Glutamine amidotransferase type-1 domain. C86 (nucleophile) is an active-site residue. Catalysis depends on residues H179 and E181. One can recognise a GMPS ATP-PPase domain in the interval 205–397 (WTMGAYREEA…LGLPASFIGR (193 aa)). 232-238 (SGGVDSS) is a binding site for ATP.

In terms of assembly, homodimer.

It carries out the reaction XMP + L-glutamine + ATP + H2O = GMP + L-glutamate + AMP + diphosphate + 2 H(+). Its pathway is purine metabolism; GMP biosynthesis; GMP from XMP (L-Gln route): step 1/1. In terms of biological role, catalyzes the synthesis of GMP from XMP. This chain is GMP synthase [glutamine-hydrolyzing], found in Roseobacter denitrificans (strain ATCC 33942 / OCh 114) (Erythrobacter sp. (strain OCh 114)).